The sequence spans 491 residues: Ketol-acid reductoisomerase (NADP(+)) (491 aa).

Residues 15-208 (AQLGKCRFMG…GGHRAGVLES (194 aa)) form the KARI N-terminal Rossmann domain. NADP(+) contacts are provided by residues 45–48 (CGAQ), Arg-68, Arg-76, Ser-78, and 108–110 (DKQ). The active site involves His-132. An NADP(+)-binding site is contributed by Gly-158. KARI C-terminal knotted domains follow at residues 209–344 (SFVA…TAPQ) and 345–484 (YEGK…MTDM). Residues Asp-217, Glu-221, Glu-389, and Glu-393 each contribute to the Mg(2+) site. Ser-414 lines the substrate pocket.

The protein belongs to the ketol-acid reductoisomerase family. Mg(2+) is required as a cofactor.

It catalyses the reaction (2R)-2,3-dihydroxy-3-methylbutanoate + NADP(+) = (2S)-2-acetolactate + NADPH + H(+). It carries out the reaction (2R,3R)-2,3-dihydroxy-3-methylpentanoate + NADP(+) = (S)-2-ethyl-2-hydroxy-3-oxobutanoate + NADPH + H(+). It functions in the pathway amino-acid biosynthesis; L-isoleucine biosynthesis; L-isoleucine from 2-oxobutanoate: step 2/4. Its pathway is amino-acid biosynthesis; L-valine biosynthesis; L-valine from pyruvate: step 2/4. In terms of biological role, involved in the biosynthesis of branched-chain amino acids (BCAA). Catalyzes an alkyl-migration followed by a ketol-acid reduction of (S)-2-acetolactate (S2AL) to yield (R)-2,3-dihydroxy-isovalerate. In the isomerase reaction, S2AL is rearranged via a Mg-dependent methyl migration to produce 3-hydroxy-3-methyl-2-ketobutyrate (HMKB). In the reductase reaction, this 2-ketoacid undergoes a metal-dependent reduction by NADPH to yield (R)-2,3-dihydroxy-isovalerate. This is Ketol-acid reductoisomerase (NADP(+)) from Salmonella typhimurium (strain LT2 / SGSC1412 / ATCC 700720).